Reading from the N-terminus, the 250-residue chain is MALRAGLVLGFHTLMTLLSPQEAGATKADHMGSYGPAFYQSYGASGQFTHEFDEEQLFSVDLKKSEAVWRLPEFGDFARFDPQGGLAGIAAIKAHLDILVERSNRSRAINVPPRVTVLPKSRVELGQPNILICIVDNIFPPVINITWLRNGQTVTEGVAQTSFYSQPDHLFRKFHYLPFVPSAEDVYDCQVEHWGLDAPLLRHWELQVPIPPPDAMETLVCALGLAIGLVGFLVGTVLIIMGTYVSSVPR.

The first 25 residues, 1-25 (MALRAGLVLGFHTLMTLLSPQEAGA), serve as a signal peptide directing secretion. The tract at residues 26 to 110 (TKADHMGSYG…ERSNRSRAIN (85 aa)) is alpha-1. Over 26-217 (TKADHMGSYG…VPIPPPDAME (192 aa)) the chain is Extracellular. Residues Asn-104 and Asn-144 are each glycosylated (N-linked (GlcNAc...) asparagine). Residues 111–204 (VPPRVTVLPK…GLDAPLLRHW (94 aa)) are alpha-2. Positions 113–205 (PRVTVLPKSR…LDAPLLRHWE (93 aa)) constitute an Ig-like C1-type domain. Residues Cys-133 and Cys-189 are joined by a disulfide bond. The interval 205-217 (ELQVPIPPPDAME) is connecting peptide. Residues 218–240 (TLVCALGLAIGLVGFLVGTVLII) form a helical membrane-spanning segment. Residues 241 to 250 (MGTYVSSVPR) are Cytoplasmic-facing.

It belongs to the MHC class II family. In terms of assembly, heterodimer of an alpha chain (DOA) and a beta chain (DOB). Forms a heterotetrameric complex with an HLA-DM molecule during intracellular transport in endosomal/lysosomal compartments in B-cells.

The protein localises to the endosome membrane. It is found in the lysosome membrane. Important modulator in the HLA class II restricted antigen presentation pathway by interaction with the HLA-DM molecule in B-cells. Modifies peptide exchange activity of HLA-DM. This Homo sapiens (Human) protein is HLA class II histocompatibility antigen, DO alpha chain (HLA-DOA).